We begin with the raw amino-acid sequence, 290 residues long: Potassium-transporting ATPase subunit beta (290 aa).

At 1–36 (MAALQEKKSCSQRMEEFQRYCWNPDTGQMLGRTLSR) the chain is on the cytoplasmic side. A helical; Signal-anchor for type II membrane protein membrane pass occupies residues 37–57 (WVWISLYYVAFYVVMTGIFAL). The Extracellular segment spans residues 58-290 (CIYTLMCTLD…KVEFKLTIQQ (233 aa)). Residues asparagine 99, asparagine 103, asparagine 130, asparagine 146, and asparagine 161 are each glycosylated (N-linked (GlcNAc...) asparagine). Cysteine 131 and cysteine 152 are disulfide-bonded. Cysteine 162 and cysteine 178 are oxidised to a cystine. N-linked (GlcNAc...) asparagine glycosylation is found at asparagine 193 and asparagine 221. Residues 194–290 (STAPRADCTF…KVEFKLTIQQ (97 aa)) form an immunoglobulin-like region. Cysteine 201 and cysteine 262 form a disulfide bridge.

This sequence belongs to the X(+)/potassium ATPases subunit beta family. The ATPase pump is composed of two subunits: alpha (catalytic) and beta (regulatory). Interacts with alpha subunit ATP12A; this interaction is required for the formation of a functionally active pump and targeting at the plasma membrane. Interacts (via N-terminus) with alpha subunit ATP4A (via the P-domain). Post-translationally, N-glycosylation is necessary for assembly and functional expression of the pump at the plasma membrane.

Its subcellular location is the apical cell membrane. It is found in the cell membrane. The beta subunit of the gastric H(+)/K(+) ATPase pump which transports H(+) ions in exchange for K(+) ions across the apical membrane of parietal cells. Plays a structural and regulatory role in the assembly and membrane targeting of a functionally active pump. Within a transport cycle, the transfer of a H(+) ion across the membrane is coupled to ATP hydrolysis and is associated with a transient phosphorylation of the alpha subunit that shifts the pump conformation from inward-facing (E1) to outward-facing state (E2). Interacts with the phosphorylation domain of the alpha subunit and functions as a ratchet, stabilizing the lumenal-open E2 conformation and preventing the reverse reaction of the transport cycle. The sequence is that of Potassium-transporting ATPase subunit beta (ATP4B) from Canis lupus familiaris (Dog).